The sequence spans 347 residues: Probable dual-specificity RNA methyltransferase RlmN (347 aa).

The active-site Proton acceptor is the Glu91. Residues 97 to 327 (YKYGNSICVS…ATVRREMGSD (231 aa)) enclose the Radical SAM core domain. An intrachain disulfide couples Cys104 to Cys332. Cys111, Cys115, and Cys118 together coordinate [4Fe-4S] cluster. Residues 158 to 159 (GE), Ser190, 213 to 215 (SLH), and Asn289 contribute to the S-adenosyl-L-methionine site. The S-methylcysteine intermediate role is filled by Cys332.

The protein belongs to the radical SAM superfamily. RlmN family. [4Fe-4S] cluster serves as cofactor.

The protein resides in the cytoplasm. The enzyme catalyses adenosine(2503) in 23S rRNA + 2 reduced [2Fe-2S]-[ferredoxin] + 2 S-adenosyl-L-methionine = 2-methyladenosine(2503) in 23S rRNA + 5'-deoxyadenosine + L-methionine + 2 oxidized [2Fe-2S]-[ferredoxin] + S-adenosyl-L-homocysteine. It carries out the reaction adenosine(37) in tRNA + 2 reduced [2Fe-2S]-[ferredoxin] + 2 S-adenosyl-L-methionine = 2-methyladenosine(37) in tRNA + 5'-deoxyadenosine + L-methionine + 2 oxidized [2Fe-2S]-[ferredoxin] + S-adenosyl-L-homocysteine. Its function is as follows. Specifically methylates position 2 of adenine 2503 in 23S rRNA and position 2 of adenine 37 in tRNAs. The sequence is that of Probable dual-specificity RNA methyltransferase RlmN from Clostridium perfringens (strain SM101 / Type A).